Consider the following 66-residue polypeptide: Cold shock protein 1 (66 aa).

Residues 4–63 (GTVKWFNADKGYGFITGEDGNDVFVHFSAIQTDGFKTLEEGQKVTFDEESSDRGPQAANV) enclose the CSD domain. The segment at 47 to 66 (VTFDEESSDRGPQAANVVPQ) is disordered.

It localises to the cytoplasm. This is Cold shock protein 1 (csp) from Lactiplantibacillus plantarum (strain ATCC BAA-793 / NCIMB 8826 / WCFS1) (Lactobacillus plantarum).